Reading from the N-terminus, the 815-residue chain is uncharacterized protein (815 aa).

Positions 1-21 (MNIYRLSFVSCLVMAMPCAMA) are cleaved as a signal peptide. Residues C795 and C814 are joined by a disulfide bond.

This sequence belongs to the fimbrial export usher family.

The protein localises to the cell outer membrane. Could be involved in the export and assembly of the putative YbgD fimbrial subunit across the outer membrane. This is an uncharacterized protein from Escherichia coli (strain K12).